The primary structure comprises 1211 residues: MKRIRSLWFNAEASYSNLNNSPSLRNKNSTGNNSRSKNYRSFSRFDLINSILLLMMLFLLAIFVTALYLTKSSRLTYSHASRAALFNPLGVISPSLGNHTLNYDPEARESSKKLYELLSDFNTAYYDDENMILGSNLFSKNTYSRQPYVANGYIGSRIPNIGFGYALDTLNFYTDAPGALNNGWPLRNHRFAGAFVSDFYCLQPKLNSTNFPELDDVGYSTVISSIPQWTNLQFSLVNDSKWFNPQNVTLDDVTNYSQNLSMKDGIVTTELDWLNSQIHVKSEIWAHRHIHPLGVVSLEISLNTDHLPSDFDSLDVNIWDILDFNTSHRTVLHSTGTDEKNNAVFMIVQPDNVPSSNCAIYSTCTVKYENSTNPINSSESFEEKDVSSNIYNVILTEDQPKIIVHKYVGIMSTEFNKNKEQQDNTNIGLAKMIALNSKGNYEKLLSSHKRAWYDLYNDAFIEIPSDSLLEMTARSSLFHLLANTRDYNVSSDRGLPVGVSGLSSDSYGGMVFWDADIWMEPALLPFFPNVAQNMNNYRNATHSQAKLNAEKYGYPGAIYPWTSGKYANCTSTGPCVDYEYHINVDVAMASFSIYLNGHEGIDDEYLRYTTWPIIKNAAQFFTAYVKYNSSLGLYETYNLTDPDEFANHINNGAFTNAGIKTLLKWATDIGNHLGEVVDPKWSEISKDIYIPRSSSNITLEYSGMNSSVEIKQADVTLMVYPLGYINDESILNNAIKDLYYYSERQSASGPAMTYPVFVAAAAGLLNHGSSSQSYLYKSVLPYLRAPFAQFSEQSDDNFLTNGLTQPAFPFLTANGGFLQSILFGLTGIRYSYEVDPDTKKINRLLRFNPIELPLLPGGIAIRNFKYMNQVLDIIIDDHNGTIVHKSGDVPIHIKIPNRSLIHDQDINFYNGSENERKPNLERRDVDRVGDPMRMDRYGTYYLLKPKQELTVQLFKPGLNARNNIAENKQITNLTAGVPGDVAFSALDGNNYTHWQPLDKIHRAKLLIDLGEYNEKEITKGMILWGQRPAKNISISILPHSEKVENLFANVTEIMQNSGNDQLLNETIGQLLDNAGIPVENVIDFDGIEQEDDESLDDVQALLHWKKEDLAKLIEQIPRLNFLKRKFVKILDNVPVSPSEPYYEASRNQSLIEILPSNRTTFTIDYDKLQVGDKGNTDWRKTRYIVVAVQGVYDDYDDDNKGATIKEIVLND.

Residues 1 to 46 (MKRIRSLWFNAEASYSNLNNSPSLRNKNSTGNNSRSKNYRSFSRFD) are Cytoplasmic-facing. Residues 47–67 (LINSILLLMMLFLLAIFVTAL) traverse the membrane as a helical segment. Residues 68 to 1211 (YLTKSSRLTY…ATIKEIVLND (1144 aa)) lie on the Periplasmic side of the membrane. The tract at residues 70 to 131 (TKSSRLTYSH…NTAYYDDENM (62 aa)) is required for cell surface targeting. 10 N-linked (GlcNAc...) asparagine glycosylation sites follow: asparagine 98, asparagine 207, asparagine 238, asparagine 247, asparagine 255, asparagine 259, asparagine 325, asparagine 370, asparagine 376, and asparagine 488. 513–514 (WD) is a substrate binding site. Residues asparagine 539, asparagine 568, asparagine 628, and asparagine 638 are each glycosylated (N-linked (GlcNAc...) asparagine). The Proton donor role is filled by glutamate 644. Residues asparagine 696 and asparagine 705 are each glycosylated (N-linked (GlcNAc...) asparagine). 711-712 (KQ) is a binding site for substrate. 10 N-linked (GlcNAc...) asparagine glycosylation sites follow: asparagine 879, asparagine 897, asparagine 910, asparagine 972, asparagine 990, asparagine 1031, asparagine 1049, asparagine 1064, asparagine 1147, and asparagine 1157.

This sequence belongs to the glycosyl hydrolase 65 family. Glycosylated.

It localises to the membrane. Its subcellular location is the vacuole lumen. The protein resides in the periplasm. It catalyses the reaction alpha,alpha-trehalose + H2O = alpha-D-glucose + beta-D-glucose. Functionally, periplasmic acid trehalase that catalyzes hydrolysis of the disaccharide trehalose and required for growth on trehalose as carbon source. Growth on trehalose is strictly respiratory. The protein is Periplasmic acid trehalase ATC1 of Saccharomyces cerevisiae (strain CEN.PK113-7D) (Baker's yeast).